We begin with the raw amino-acid sequence, 116 residues long: Ribonuclease P protein component (116 aa).

The protein belongs to the RnpA family. Consists of a catalytic RNA component (M1 or rnpB) and a protein subunit.

It carries out the reaction Endonucleolytic cleavage of RNA, removing 5'-extranucleotides from tRNA precursor.. RNaseP catalyzes the removal of the 5'-leader sequence from pre-tRNA to produce the mature 5'-terminus. It can also cleave other RNA substrates such as 4.5S RNA. The protein component plays an auxiliary but essential role in vivo by binding to the 5'-leader sequence and broadening the substrate specificity of the ribozyme. This Leuconostoc citreum (strain KM20) protein is Ribonuclease P protein component.